We begin with the raw amino-acid sequence, 1691 residues long: MEAHQFIKAPGITTAIEQAALAAANSALANAVVVRPFLSHQQVEILINLMQPRQLVFRPEVFWNHPIQRVIHNELEQYCRARSGRCLEIGAHPRSINDNPNVLHRCFLHPVGRDVQRWYTAPTRGPAANCRRSALRGLPPADRTYCFDGFAGCRFAAETGVALYSLHDLQPADVAEAMARHGMTRLYAAFHLPPEVLLPPGTYRTSSYLLIHDGKRAVVTYEGDTSAGYNHDVATLRTWIRTTKVVGEHPLVIERVRGIGCHFVLLITAAPEPSPMPYVPYPRSTEVYVRSIFGPGGSPSLFPTACAVKSTFHAVPTHIWDRLMLFGATLDDQAFCCSRLMTYLRGISYKVTVGALVANEGWNATEDALTAVITAAYLTICHQRYLRTQAISKGMRRLELEHAQKFISRLYSWLFEKSGRDYIPGRQLQFYAQCRRWLSAGFHLDPRTLVFDESVPCSCRTTIRRIAGKFCCFMKWLGQECSCFLQPAEGLAGDQGHDNEAYEGSDVDTAEPATLDITGSYIVDGRSLQTVYQALDLPADLVARAARLSATVTVTETSGRLDCQTMIGNKTFLTTFVDGARLEVNGPEQLNLSFDSQQCSMAAGPFCLTYAAVDGGLEVHFSTAGLESRVVFPPGNAPTAPPSEVTAFCSALYRHNRQSQRQSVIGSLWLHPEGLLGLFPPFSPGHEWRSANPFCGESTLYTRTWSTITDTPLTVGLISGHLDAAPHSGGPPATATGPAVGSSDSPDPDPLPDVTDGSRPSGARPAGPNPNGVPQRRLLHTYPDGAKIYVGSIFESECTWLVNASNAGHRPGGGLCHAFFQRYPDSFDATKFVMRDGLAAYTLTPRPIIHAVAPDYRLEHNPKRLEAAYRETCARRGTAAYPLLGAGIYQVPVSLSFDAWERNHRPFDELYLTELAARWFESNRPGQPTLNITEDTARAANLALELDSGSEVGRACAGCKVEPGVVRYQFTAGVPGSGKSKSVQQADVDVVVVPTRELRNAWRRRGFAAFTPHTAARVTSGRRVVIDEAPSLPPHLLLLHMQRAASVHLLGDPNQIPAIDFEHTGLIPAIRPELVPTSWWHVTHRCPADVCELVRGAYPKIQTTSKVLRSLFWGEPAVGQKLVFTQAAKAAHPGSITVHEAQGATFTTTTIIATADARGLIQSSRAHAIVALTRHTEKCVILDSPGLLREVGISDAIVNNFFLSGGEVGHQRPSVIPRGNPDRNVDVLAAFPPSCQISAFHQLAEELGHRPAPVAAVLPPCPELEQGLLYLPQELASCDSVVTFELTDIVHCRMAAPSQRKAVLSTLVGRYGRRTRLYDAGHTDVRASLARFIPTLGRVTATTCELFELVEAMVEKGQDGSAVLELDLCSRDVSRITFFQKDCNKFTTGETIAHGKVGQGIFRWSKTFCALFGPWFRAIEKAILSLLPQAVFYGDAYDDSVFSAAVAGASHAMVFENDFSEFDSTQNNFSLGLECAIMEECGMPQWLVRLYHAVRSAWILQAPKESLRGFWKKHSGEPGSLLWNTVWNMAIIAHCYEFRDLQVAAFKGDDSVVLCSEYRQSPGAGSLIAGCGLKLKADFRPIGLYAGVVVAPGLGALPDVVRFAGRLSEKNWGPDPERAEQLRLAVQDFLRRLTNVAQICVEVVSRVYGVSPGLVHNLIGMLQTIGDGKAHFTESVKPILDLTHSIMHRSE.

The 185-residue stretch at 56–240 folds into the Alphavirus-like MT domain; that stretch reads VFRPEVFWNH…HDVATLRTWI (185 aa). The segment at 60–240 is methyltransferase; that stretch reads EVFWNHPIQR…HDVATLRTWI (181 aa). The interval 241 to 439 is Y-domain; it reads RTTKVVGEHP…FYAQCRRWLS (199 aa). An intrachain disulfide couples Cys-434 to Cys-481. Residues 442–509 are putative protease; it reads FHLDPRTLVF…EAYEGSDVDT (68 aa). Residues 510 to 691 form a zinc-binding region; sequence AEPATLDITG…FSPGHEWRSA (182 aa). Zn(2+) contacts are provided by His-671, Glu-673, and His-686. The tract at residues 710–776 is hinge; the sequence is DTPLTVGLIS…GPNPNGVPQR (67 aa). Residues 722-778 form a disordered region; that stretch reads LDAAPHSGGPPATATGPAVGSSDSPDPDPLPDVTDGSRPSGARPAGPNPNGVPQRRL. In terms of domain architecture, Macro spans 773-919; sequence VPQRRLLHTY…LYLTELAARW (147 aa). Residues 783-940 are X-domain; sequence PDGAKIYVGS…NITEDTARAA (158 aa). Residues 932–1080 enclose the (+)RNA virus helicase ATP-binding domain; the sequence is ITEDTARAAN…RPELVPTSWW (149 aa). An NTPase/helicase region spans residues 958–1202; that stretch reads GCKVEPGVVR…ISDAIVNNFF (245 aa). 973–980 contributes to the ATP binding site; it reads GVPGSGKS. The region spanning 1081-1214 is the (+)RNA virus helicase C-terminal domain; that stretch reads HVTHRCPADV…GGEVGHQRPS (134 aa). The interval 1205 to 1691 is RNA-directed RNA polymerase; the sequence is GGEVGHQRPS…LTHSIMHRSE (487 aa). Residues 1452-1563 form the RdRp catalytic domain; it reads AMVFENDFSE…LCSEYRQSPG (112 aa).

It belongs to the hepevirus non-structural polyprotein family. As to quaternary structure, the protease domain interacts with host EIF2AK4 (via C-terminus); this interaction inhibits dimerization of EIF2AK4 and prevents EIF2AK4-mediated phosphorylation of host EIF2A. Requires Mg(2+) as cofactor. ORF1 polyprotein does not seem to be processed into distinct enzymatic domains by a viral protease belonging to ORF1, but could be processed by a host serine protease like thrombin.

Its subcellular location is the host cytoplasm. The protein localises to the host perinuclear region. The enzyme catalyses RNA(n) + a ribonucleoside 5'-triphosphate = RNA(n+1) + diphosphate. It catalyses the reaction GTP + S-adenosyl-L-methionine = N(7)-methyl-GTP + S-adenosyl-L-homocysteine. Putative protease: Inhibited by chymostatin. Functionally, methyltransferase: Displays a capping enzyme activity. This function is necessary since all viral RNAs are synthesized in the cytoplasm, and host capping enzymes are restricted to the nucleus. The enzymatic reaction involves a covalent link between 7-methyl-GMP and the methyltransferase, whereas eukaryotic capping enzymes form a covalent complex only with GMP. Methyltransferase catalyzes transfer of a methyl group from S-adenosylmethionine to GTP and GDP to yield m(7)GTP or m(7)GDP. GDP is a better substrate than GTP. This enzyme also displays guanylyltransferase activity to form a covalent complex, methyltransferase-m(7)GMP, from which 7-methyl-GMP is transferred to the mRNA to create the cap structure. In terms of biological role, Y-domain: Indispensable for virus replication. Its function is as follows. Putative protease: The putative protease domain although necessary for replication of the virus may not be a protease but rather a structural Zn(2+)-binding domain. Inhibits induction of IFN-beta by MDA5 and RIG-I pathways and down-regulates the expression of MDA5. NTPase/helicase: Multi-functional protein that exhibits NTPase and RNA unwinding activities. Hydrolyzes all NTPs efficiently and unwinds RNA duplexes containing 5' overhangs. Possesses a sequence independent RNA-5'-triphosphatase (RTPase) activity suggestive of its role in forming viral cap structure. Also participates in viral genome replication, RNA translocation and genome packaging/unpackaging. Functionally, RNA-directed RNA polymerase: Plays an essential role in the virus replication. Binds to the 3'-end of the genomic RNA to initiate viral replication. The chain is Non-structural polyprotein pORF1 from Bandicota bengalensis (lesser bandicoot rat).